The following is a 253-amino-acid chain: Indole-3-glycerol phosphate synthase (253 aa).

Belongs to the TrpC family.

The enzyme catalyses 1-(2-carboxyphenylamino)-1-deoxy-D-ribulose 5-phosphate + H(+) = (1S,2R)-1-C-(indol-3-yl)glycerol 3-phosphate + CO2 + H2O. Its pathway is amino-acid biosynthesis; L-tryptophan biosynthesis; L-tryptophan from chorismate: step 4/5. The protein is Indole-3-glycerol phosphate synthase of Petrotoga mobilis (strain DSM 10674 / SJ95).